The chain runs to 254 residues: Ciliary microtubule associated protein 1A (254 aa).

2 STPGR repeats span residues 180 to 205 (PGPA…MAAR) and 216 to 241 (PGPG…FGIK). The tract at residues 207 to 226 (EPPGDKTLKPGPGAHSPEKV) is disordered.

This sequence belongs to the CIMAP family. Microtubule inner protein component of sperm flagellar doublet microtubules. As to expression, testis-specific.

It localises to the cytoplasm. The protein resides in the cytoskeleton. Its subcellular location is the flagellum axoneme. Functionally, outer dense fibers are filamentous structures located on the outside of the axoneme in the midpiece and principal piece of the mammalian sperm tail. May help to maintain the passive elastic structures and elastic recoil of the sperm tail. This is Ciliary microtubule associated protein 1A from Homo sapiens (Human).